Consider the following 168-residue polypeptide: uncharacterized protein (168 aa).

This is an uncharacterized protein from Saccharomyces cerevisiae (strain ATCC 204508 / S288c) (Baker's yeast).